The primary structure comprises 273 residues: Shikimate dehydrogenase (NADP(+)) (273 aa).

Residues 14–16 and Thr61 contribute to the shikimate site; that span reads SKS. Catalysis depends on Lys65, which acts as the Proton acceptor. 2 residues coordinate shikimate: Asn86 and Asp102. Residues 126 to 130, 150 to 155, and Met213 contribute to the NADP(+) site; these read GAGGA and NRTVAK. Tyr215 contacts shikimate. Gly237 contacts NADP(+).

This sequence belongs to the shikimate dehydrogenase family. In terms of assembly, homodimer.

It carries out the reaction shikimate + NADP(+) = 3-dehydroshikimate + NADPH + H(+). The protein operates within metabolic intermediate biosynthesis; chorismate biosynthesis; chorismate from D-erythrose 4-phosphate and phosphoenolpyruvate: step 4/7. Its function is as follows. Involved in the biosynthesis of the chorismate, which leads to the biosynthesis of aromatic amino acids. Catalyzes the reversible NADPH linked reduction of 3-dehydroshikimate (DHSA) to yield shikimate (SA). The polypeptide is Shikimate dehydrogenase (NADP(+)) (Tolumonas auensis (strain DSM 9187 / NBRC 110442 / TA 4)).